We begin with the raw amino-acid sequence, 118 residues long: MNPLNLSTFIVFTLFAASATTALTCFQCTTSEGSDYCVSSFPKPSQCLPLMNYCTKIITTSNGAISVLRSCNVVSLDNTCMETGTGKICSFSCDTDACNAGSQFHCNRFQLPFLLTLF.

The first 22 residues, 1–22, serve as a signal peptide directing secretion; sequence MNPLNLSTFIVFTLFAASATTA.

The protein belongs to the scoloptoxin-05 family. Post-translationally, contains 5 disulfide bonds. In terms of tissue distribution, expressed by the venom gland.

The protein localises to the secreted. The chain is U-scoloptoxin(05)-Cw1a from Cormocephalus westwoodi (Westwood's green centipede).